The primary structure comprises 108 residues: uncharacterized protein (108 aa).

The segment covering 1–12 (MSNQQKQLQLPS) has biased composition (polar residues). Residues 1 to 22 (MSNQQKQLQLPSASIKKPKEKQ) form a disordered region.

This is an uncharacterized protein from Dictyostelium discoideum (Social amoeba).